Here is a 278-residue protein sequence, read N- to C-terminus: Large ribosomal subunit protein uL2 (278 aa).

The disordered stretch occupies residues 218-278; that stretch reads RPHNRGVVMN…IMRSRHQRKK (61 aa).

It belongs to the universal ribosomal protein uL2 family. Part of the 50S ribosomal subunit. Forms a bridge to the 30S subunit in the 70S ribosome.

Functionally, one of the primary rRNA binding proteins. Required for association of the 30S and 50S subunits to form the 70S ribosome, for tRNA binding and peptide bond formation. It has been suggested to have peptidyltransferase activity; this is somewhat controversial. Makes several contacts with the 16S rRNA in the 70S ribosome. The protein is Large ribosomal subunit protein uL2 of Rhizobium etli (strain CIAT 652).